The following is a 274-amino-acid chain: 2,3,4,5-tetrahydropyridine-2,6-dicarboxylate N-succinyltransferase (274 aa).

Substrate-binding residues include Arg-104 and Asp-141.

It belongs to the transferase hexapeptide repeat family. As to quaternary structure, homotrimer.

The protein resides in the cytoplasm. It catalyses the reaction (S)-2,3,4,5-tetrahydrodipicolinate + succinyl-CoA + H2O = (S)-2-succinylamino-6-oxoheptanedioate + CoA. Its pathway is amino-acid biosynthesis; L-lysine biosynthesis via DAP pathway; LL-2,6-diaminopimelate from (S)-tetrahydrodipicolinate (succinylase route): step 1/3. In Salmonella typhi, this protein is 2,3,4,5-tetrahydropyridine-2,6-dicarboxylate N-succinyltransferase.